A 732-amino-acid polypeptide reads, in one-letter code: 1,4-alpha-glucan branching enzyme GlgB (732 aa).

The Nucleophile role is filled by Asp409. Catalysis depends on Glu462, which acts as the Proton donor.

This sequence belongs to the glycosyl hydrolase 13 family. GlgB subfamily. As to quaternary structure, monomer.

The catalysed reaction is Transfers a segment of a (1-&gt;4)-alpha-D-glucan chain to a primary hydroxy group in a similar glucan chain.. Its pathway is glycan biosynthesis; glycogen biosynthesis. Functionally, catalyzes the formation of the alpha-1,6-glucosidic linkages in glycogen by scission of a 1,4-alpha-linked oligosaccharide from growing alpha-1,4-glucan chains and the subsequent attachment of the oligosaccharide to the alpha-1,6 position. The protein is 1,4-alpha-glucan branching enzyme GlgB of Corynebacterium diphtheriae (strain ATCC 700971 / NCTC 13129 / Biotype gravis).